The chain runs to 300 residues: Formamidopyrimidine-DNA glycosylase (300 aa).

The active-site Schiff-base intermediate with DNA is Pro-2. Glu-3 (proton donor) is an active-site residue. The active-site Proton donor; for beta-elimination activity is Lys-60. 3 residues coordinate DNA: His-108, Arg-136, and Arg-181. The segment at 266–300 (WVYSRAGQPCRICNTPLEKIKLAGRSTHFCPQCQK) adopts an FPG-type zinc-finger fold. Arg-290 serves as the catalytic Proton donor; for delta-elimination activity.

This sequence belongs to the FPG family. In terms of assembly, monomer. Zn(2+) serves as cofactor.

The catalysed reaction is Hydrolysis of DNA containing ring-opened 7-methylguanine residues, releasing 2,6-diamino-4-hydroxy-5-(N-methyl)formamidopyrimidine.. It catalyses the reaction 2'-deoxyribonucleotide-(2'-deoxyribose 5'-phosphate)-2'-deoxyribonucleotide-DNA = a 3'-end 2'-deoxyribonucleotide-(2,3-dehydro-2,3-deoxyribose 5'-phosphate)-DNA + a 5'-end 5'-phospho-2'-deoxyribonucleoside-DNA + H(+). Involved in base excision repair of DNA damaged by oxidation or by mutagenic agents. Acts as a DNA glycosylase that recognizes and removes damaged bases. Has a preference for oxidized purines, such as 7,8-dihydro-8-oxoguanine (8-oxoG). Has AP (apurinic/apyrimidinic) lyase activity and introduces nicks in the DNA strand. Cleaves the DNA backbone by beta-delta elimination to generate a single-strand break at the site of the removed base with both 3'- and 5'-phosphates. The sequence is that of Formamidopyrimidine-DNA glycosylase from Trichodesmium erythraeum (strain IMS101).